A 240-amino-acid polypeptide reads, in one-letter code: MFFVMDPVFLSEITVELVKHSASDSDVVFSARVSTLGSFVAVTDCLSNRDIGLITFLMRERHGSPFEHSHMTFRISAPIFVFREFMRHRIASYNEESGRYKNLDPVFYIPDEKRKLVQIGAPGAYKFEEGTSEQYGLLIEEMKELSLAAYDTYKRLLACGIAREVARMILPLNLYSTMYVTINARSLMNFLSVRTSRANSAFHSYPQREIELCADRIEEIWKGLMPETHAAFEKQGRVAP.

One can recognise a ThyX domain in the interval 13 to 235 (ITVELVKHSA…PETHAAFEKQ (223 aa)). FAD-binding positions include Ser64, 87-89 (RHR), and Glu95. DUMP contacts are provided by residues 84-87 (EFMR), 95-99 (EESGR), and Arg167. The short motif at 87-97 (RHRIASYNEES) is the ThyX motif element. FAD-binding positions include 183 to 185 (NAR) and Asn189. Arg194 contacts dUMP. Arg194 acts as the Involved in ionization of N3 of dUMP, leading to its activation in catalysis.

The protein belongs to the thymidylate synthase ThyX family. In terms of assembly, homotetramer. FAD serves as cofactor.

The catalysed reaction is dUMP + (6R)-5,10-methylene-5,6,7,8-tetrahydrofolate + NADPH + H(+) = dTMP + (6S)-5,6,7,8-tetrahydrofolate + NADP(+). It participates in pyrimidine metabolism; dTTP biosynthesis. Catalyzes the reductive methylation of 2'-deoxyuridine-5'-monophosphate (dUMP) to 2'-deoxythymidine-5'-monophosphate (dTMP) while utilizing 5,10-methylenetetrahydrofolate (mTHF) as the methyl donor, and NADPH and FADH(2) as the reductant. The sequence is that of Flavin-dependent thymidylate synthase from Tropheryma whipplei (strain TW08/27) (Whipple's bacillus).